Here is a 474-residue protein sequence, read N- to C-terminus: Sugar transporter ERD6-like 17 (474 aa).

Helical transmembrane passes span 27–47, 76–96, 106–126, 129–149, 159–180, 184–204, 266–286, 302–322, 329–349, 363–383, 403–423, and 429–449; these read ITAC…SFGV, FATL…MVIG, FLCI…LLNF, IISG…IAEI, TFSN…GNFI, TLAL…FFVP, TLVV…AAVI, IGTT…LILV, PLLM…GVAF, ILSF…LGGL, IVTL…NFLF, and GTFF…WLLV.

It belongs to the major facilitator superfamily. Sugar transporter (TC 2.A.1.1) family. In terms of tissue distribution, expressed in young seedlings.

It localises to the membrane. Sugar transporter. The chain is Sugar transporter ERD6-like 17 from Arabidopsis thaliana (Mouse-ear cress).